Here is a 230-residue protein sequence, read N- to C-terminus: Uracil-DNA glycosylase (230 aa).

Asp70 (proton acceptor) is an active-site residue.

It belongs to the uracil-DNA glycosylase (UDG) superfamily. UNG family.

The protein localises to the cytoplasm. The catalysed reaction is Hydrolyzes single-stranded DNA or mismatched double-stranded DNA and polynucleotides, releasing free uracil.. Its function is as follows. Excises uracil residues from the DNA which can arise as a result of misincorporation of dUMP residues by DNA polymerase or due to deamination of cytosine. The protein is Uracil-DNA glycosylase of Pseudomonas fluorescens (strain ATCC BAA-477 / NRRL B-23932 / Pf-5).